The chain runs to 406 residues: Ribose-phosphate pyrophosphokinase 3, mitochondrial (406 aa).

The disordered stretch occupies residues 1–32 (MAATPHRHLLQPCKNPAISSSETLKPSSSFSL). The transit peptide at 1–87 (MAATPHRHLL…RRFQMSSNQE (87 aa)) directs the protein to the mitochondrion. Low complexity predominate over residues 18-32 (ISSSETLKPSSSFSL). 2 residues coordinate Mg(2+): D226 and H228. Residues 309-324 (GRHVVIVDDLVQSGGT) form a binding of phosphoribosylpyrophosphate region.

It belongs to the ribose-phosphate pyrophosphokinase family.

It is found in the mitochondrion. It catalyses the reaction D-ribose 5-phosphate + ATP = 5-phospho-alpha-D-ribose 1-diphosphate + AMP + H(+). The polypeptide is Ribose-phosphate pyrophosphokinase 3, mitochondrial (PRS3) (Spinacia oleracea (Spinach)).